The primary structure comprises 305 residues: 2-pyrone-4,6-dicarbaxylate hydrolase (305 aa).

Substrate-binding positions include 32–34 (HCH), Tyr-50, Thr-78, Arg-125, Arg-131, Tyr-158, and His-182. Asp-258 serves as the catalytic Proton acceptor. Asn-263 serves as a coordination point for substrate.

This sequence belongs to the metallo-dependent hydrolases superfamily. PDC hydrolase family.

It carries out the reaction 2-oxo-2H-pyran-4,6-dicarboxylate + H2O = (1E)-4-oxobut-1-ene-1,2,4-tricarboxylate + H(+). With respect to regulation, strongly inhibited by 1 mM Zn(2+), Cu(2+), Mn(2+) and Co(2+) ions. Also inhibited by 5,5'-dithiobis(2-nitrobenzoic acid) (Ellman reagent) in vitro. Its function is as follows. Involved in the degradation of aromatic compounds via the protocatechuate 4,5-cleavage pathway. Catalyzes the hydrolysis of 2-pyrone-4,6-dicarboxylate (PDC) to oxalomesaconate (OMA). Also catalyzes the reverse reaction. The protein is 2-pyrone-4,6-dicarbaxylate hydrolase of Comamonas testosteroni (Pseudomonas testosteroni).